The following is a 192-amino-acid chain: uncharacterized protein (192 aa).

This sequence belongs to the IIV-6 358L family.

This is an uncharacterized protein from Aedes vexans (Inland floodwater mosquito).